We begin with the raw amino-acid sequence, 324 residues long: Anthranilate phosphoribosyltransferase (324 aa).

5-phospho-alpha-D-ribose 1-diphosphate-binding positions include Gly72, 75 to 76 (GD), Ser80, 82 to 85 (NVST), 99 to 107 (KHGNVSITS), and Ser111. An anthranilate-binding site is contributed by Gly72. Ser84 lines the Mg(2+) pocket. Asn102 provides a ligand contact to anthranilate. Arg157 lines the anthranilate pocket. Residues Asp215 and Glu216 each coordinate Mg(2+).

This sequence belongs to the anthranilate phosphoribosyltransferase family. In terms of assembly, homodimer. Requires Mg(2+) as cofactor.

It catalyses the reaction N-(5-phospho-beta-D-ribosyl)anthranilate + diphosphate = 5-phospho-alpha-D-ribose 1-diphosphate + anthranilate. The protein operates within amino-acid biosynthesis; L-tryptophan biosynthesis; L-tryptophan from chorismate: step 2/5. Functionally, catalyzes the transfer of the phosphoribosyl group of 5-phosphorylribose-1-pyrophosphate (PRPP) to anthranilate to yield N-(5'-phosphoribosyl)-anthranilate (PRA). The sequence is that of Anthranilate phosphoribosyltransferase from Pyrococcus abyssi (strain GE5 / Orsay).